A 190-amino-acid polypeptide reads, in one-letter code: dTTP/UTP pyrophosphatase (190 aa).

The Proton acceptor role is filled by aspartate 71.

It belongs to the Maf family. YhdE subfamily. A divalent metal cation is required as a cofactor.

It localises to the cytoplasm. It catalyses the reaction dTTP + H2O = dTMP + diphosphate + H(+). It carries out the reaction UTP + H2O = UMP + diphosphate + H(+). Nucleoside triphosphate pyrophosphatase that hydrolyzes dTTP and UTP. May have a dual role in cell division arrest and in preventing the incorporation of modified nucleotides into cellular nucleic acids. The chain is dTTP/UTP pyrophosphatase from Xanthomonas campestris pv. campestris (strain ATCC 33913 / DSM 3586 / NCPPB 528 / LMG 568 / P 25).